Here is a 313-residue protein sequence, read N- to C-terminus: Porphobilinogen deaminase (313 aa).

Position 241 is an S-(dipyrrolylmethanemethyl)cysteine (Cys241).

This sequence belongs to the HMBS family. Monomer. Dipyrromethane serves as cofactor.

The catalysed reaction is 4 porphobilinogen + H2O = hydroxymethylbilane + 4 NH4(+). It participates in porphyrin-containing compound metabolism; protoporphyrin-IX biosynthesis; coproporphyrinogen-III from 5-aminolevulinate: step 2/4. The protein operates within porphyrin-containing compound metabolism; chlorophyll biosynthesis. Functionally, tetrapolymerization of the monopyrrole PBG into the hydroxymethylbilane pre-uroporphyrinogen in several discrete steps. The chain is Porphobilinogen deaminase from Chlorobium luteolum (strain DSM 273 / BCRC 81028 / 2530) (Pelodictyon luteolum).